Reading from the N-terminus, the 183-residue chain is Ran guanine nucleotide release factor (183 aa).

The tract at residues E23–D66 is interaction with RAN.

This sequence belongs to the MOG1 family. As to quaternary structure, monomer. Interacts with ran.

The protein resides in the nucleus. Its subcellular location is the cytoplasm. It localises to the perinuclear region. It is found in the cell membrane. Its function is as follows. May regulate the intracellular trafficking of RAN. Promotes guanine nucleotide release from RAN and inhibits binding of new GTP. Plays a role in the regulation of the levels of GTP-bound RAN in the nucleus. Required for normal expression of the ion channel hcn4 and for normal expression of the cardiac transcription factors nkx2.5, gata4 and hand2 during embryonic development. Required for normal embryonic heart development and normal heart rate. In Danio rerio (Zebrafish), this protein is Ran guanine nucleotide release factor.